The primary structure comprises 122 residues: NADPH-dependent 7-cyano-7-deazaguanine reductase (122 aa).

Cys34 serves as the catalytic Thioimide intermediate. The Proton donor role is filled by Asp41. Substrate contacts are provided by residues 56–58 (VEL) and 75–76 (HE).

It belongs to the GTP cyclohydrolase I family. QueF type 1 subfamily.

The protein localises to the cytoplasm. The catalysed reaction is 7-aminomethyl-7-carbaguanine + 2 NADP(+) = 7-cyano-7-deazaguanine + 2 NADPH + 3 H(+). It functions in the pathway tRNA modification; tRNA-queuosine biosynthesis. Functionally, catalyzes the NADPH-dependent reduction of 7-cyano-7-deazaguanine (preQ0) to 7-aminomethyl-7-deazaguanine (preQ1). The polypeptide is NADPH-dependent 7-cyano-7-deazaguanine reductase (Anaeromyxobacter sp. (strain Fw109-5)).